The following is a 427-amino-acid chain: Kynureninase (427 aa).

Pyridoxal 5'-phosphate is bound by residues Thr104, Thr105, 132 to 135 (FPSD), Asp213, His216, and Tyr238. An N6-(pyridoxal phosphate)lysine modification is found at Lys239. Residues Trp267 and Thr295 each coordinate pyridoxal 5'-phosphate.

It belongs to the kynureninase family. Homodimer. The cofactor is pyridoxal 5'-phosphate.

It carries out the reaction L-kynurenine + H2O = anthranilate + L-alanine + H(+). It catalyses the reaction 3-hydroxy-L-kynurenine + H2O = 3-hydroxyanthranilate + L-alanine + H(+). The protein operates within amino-acid degradation; L-kynurenine degradation; L-alanine and anthranilate from L-kynurenine: step 1/1. Its pathway is cofactor biosynthesis; NAD(+) biosynthesis; quinolinate from L-kynurenine: step 2/3. In terms of biological role, catalyzes the cleavage of L-kynurenine (L-Kyn) and L-3-hydroxykynurenine (L-3OHKyn) into anthranilic acid (AA) and 3-hydroxyanthranilic acid (3-OHAA), respectively. The polypeptide is Kynureninase (Shouchella clausii (strain KSM-K16) (Alkalihalobacillus clausii)).